Reading from the N-terminus, the 199-residue chain is Glycerol-3-phosphate acyltransferase (199 aa).

5 helical membrane passes run 3–23, 50–70, 78–98, 113–133, and 154–174; these read AAVW…GVLV, WGPA…AVLV, DWML…SVFL, LLFL…SVIL, and LALG…LLIF.

Belongs to the PlsY family. Probably interacts with PlsX.

The protein localises to the cell inner membrane. It catalyses the reaction an acyl phosphate + sn-glycerol 3-phosphate = a 1-acyl-sn-glycero-3-phosphate + phosphate. It participates in lipid metabolism; phospholipid metabolism. In terms of biological role, catalyzes the transfer of an acyl group from acyl-phosphate (acyl-PO(4)) to glycerol-3-phosphate (G3P) to form lysophosphatidic acid (LPA). This enzyme utilizes acyl-phosphate as fatty acyl donor, but not acyl-CoA or acyl-ACP. The sequence is that of Glycerol-3-phosphate acyltransferase from Thermus thermophilus (strain ATCC 27634 / DSM 579 / HB8).